The following is a 329-amino-acid chain: Beta-ketoacyl-[acyl-carrier-protein] synthase III (329 aa).

Catalysis depends on residues Cys-123 and His-256. Positions 257–261 (QANIR) are ACP-binding. Asn-286 is an active-site residue.

This sequence belongs to the thiolase-like superfamily. FabH family. Homodimer.

The protein localises to the cytoplasm. The enzyme catalyses malonyl-[ACP] + acetyl-CoA + H(+) = 3-oxobutanoyl-[ACP] + CO2 + CoA. It participates in lipid metabolism; fatty acid biosynthesis. Functionally, catalyzes the condensation reaction of fatty acid synthesis by the addition to an acyl acceptor of two carbons from malonyl-ACP. Catalyzes the first condensation reaction which initiates fatty acid synthesis and may therefore play a role in governing the total rate of fatty acid production. Possesses both acetoacetyl-ACP synthase and acetyl transacylase activities. Its substrate specificity determines the biosynthesis of branched-chain and/or straight-chain of fatty acids. This chain is Beta-ketoacyl-[acyl-carrier-protein] synthase III, found in Burkholderia mallei (strain NCTC 10247).